The following is a 407-amino-acid chain: Zinc finger protein 552 (407 aa).

In terms of domain architecture, KRAB spans valine 14–alanine 90. The C2H2-type 1 zinc finger occupies histidine 91–histidine 113. The segment at histidine 119–histidine 141 adopts a C2H2-type 2; degenerate zinc-finger fold. Residues lysine 176 and lysine 198 each participate in a glycyl lysine isopeptide (Lys-Gly) (interchain with G-Cter in SUMO2) cross-link. The C2H2-type 3; degenerate zinc finger occupies tyrosine 212–leucine 234. The C2H2-type 4; degenerate zinc finger occupies glutamate 244–histidine 262. Residues lysine 251 and lysine 266 each participate in a glycyl lysine isopeptide (Lys-Gly) (interchain with G-Cter in SUMO2) cross-link. 5 consecutive C2H2-type zinc fingers follow at residues tyrosine 268–histidine 290, tyrosine 296–histidine 318, tyrosine 324–histidine 346, tyrosine 352–histidine 374, and tyrosine 380–histidine 402. A Glycyl lysine isopeptide (Lys-Gly) (interchain with G-Cter in SUMO2) cross-link involves residue lysine 308.

It belongs to the krueppel C2H2-type zinc-finger protein family.

The protein resides in the nucleus. May be involved in transcriptional regulation. This Homo sapiens (Human) protein is Zinc finger protein 552 (ZNF552).